The sequence spans 434 residues: Methylenetetrahydrofolate--tRNA-(uracil-5-)-methyltransferase TrmFO (434 aa).

10–15 (GAGLAG) provides a ligand contact to FAD.

Belongs to the MnmG family. TrmFO subfamily. It depends on FAD as a cofactor.

It is found in the cytoplasm. It carries out the reaction uridine(54) in tRNA + (6R)-5,10-methylene-5,6,7,8-tetrahydrofolate + NADH + H(+) = 5-methyluridine(54) in tRNA + (6S)-5,6,7,8-tetrahydrofolate + NAD(+). The catalysed reaction is uridine(54) in tRNA + (6R)-5,10-methylene-5,6,7,8-tetrahydrofolate + NADPH + H(+) = 5-methyluridine(54) in tRNA + (6S)-5,6,7,8-tetrahydrofolate + NADP(+). Its function is as follows. Catalyzes the folate-dependent formation of 5-methyl-uridine at position 54 (M-5-U54) in all tRNAs. The protein is Methylenetetrahydrofolate--tRNA-(uracil-5-)-methyltransferase TrmFO of Bacillus cereus (strain ATCC 10987 / NRS 248).